The following is a 550-amino-acid chain: Chaperonin GroEL (550 aa).

ATP contacts are provided by residues 30-33 (TLGP), Lys-51, 87-91 (DGTTT), Gly-415, and Asp-496.

The protein belongs to the chaperonin (HSP60) family. Forms a cylinder of 14 subunits composed of two heptameric rings stacked back-to-back. Interacts with the co-chaperonin GroES.

Its subcellular location is the cytoplasm. The enzyme catalyses ATP + H2O + a folded polypeptide = ADP + phosphate + an unfolded polypeptide.. Its function is as follows. Together with its co-chaperonin GroES, plays an essential role in assisting protein folding. The GroEL-GroES system forms a nano-cage that allows encapsulation of the non-native substrate proteins and provides a physical environment optimized to promote and accelerate protein folding. The chain is Chaperonin GroEL from Rickettsia prowazekii (strain Madrid E).